We begin with the raw amino-acid sequence, 272 residues long: MTAPAIHPSAVIESGARIGDGARIGPFCHVGPEVVLGADCELISHVVLAGRTTIGPRTRIFPFASIGHQPQDLKYRGEASTLTIGADCLIREGVTMNPGTSGGGLETLVGDHCTFLANSHVGHDCRVGAHVIFSNNVMLAGHCSVGDYAILGGGAAVIQFARVGAHAFVGGLSGLENDCIPYGMVLGNRAYLSGLNIIGLQRRGFAREDIHALRRAYRLLFAPEGTLMERVEDVAATFESHAAVAEILDFIRLGGKRSICTPREVPTPISAA.

Belongs to the transferase hexapeptide repeat family. LpxA subfamily. Homotrimer.

It localises to the cytoplasm. The enzyme catalyses a (3R)-hydroxyacyl-[ACP] + UDP-N-acetyl-alpha-D-glucosamine = a UDP-3-O-[(3R)-3-hydroxyacyl]-N-acetyl-alpha-D-glucosamine + holo-[ACP]. The protein operates within glycolipid biosynthesis; lipid IV(A) biosynthesis; lipid IV(A) from (3R)-3-hydroxytetradecanoyl-[acyl-carrier-protein] and UDP-N-acetyl-alpha-D-glucosamine: step 1/6. Involved in the biosynthesis of lipid A, a phosphorylated glycolipid that anchors the lipopolysaccharide to the outer membrane of the cell. The polypeptide is Acyl-[acyl-carrier-protein]--UDP-N-acetylglucosamine O-acyltransferase (Methylobacterium radiotolerans (strain ATCC 27329 / DSM 1819 / JCM 2831 / NBRC 15690 / NCIMB 10815 / 0-1)).